The primary structure comprises 79 residues: Small ribosomal subunit protein bS18 (79 aa).

The protein belongs to the bacterial ribosomal protein bS18 family. In terms of assembly, part of the 30S ribosomal subunit. Forms a tight heterodimer with protein bS6.

Functionally, binds as a heterodimer with protein bS6 to the central domain of the 16S rRNA, where it helps stabilize the platform of the 30S subunit. The sequence is that of Small ribosomal subunit protein bS18 from Aster yellows witches'-broom phytoplasma (strain AYWB).